The primary structure comprises 715 residues: Polyribonucleotide nucleotidyltransferase (715 aa).

Asp490 and Asp496 together coordinate Mg(2+). The KH domain maps to 557-616 (PRIETMTIPTDKIREVIGSGGKVIREIVETSGAKVDISDDGTIKIASANADSIKKAYDMI). Residues 626 to 694 (GKIYVGKVVK…DRGKVRLGMK (69 aa)) form the S1 motif domain.

It belongs to the polyribonucleotide nucleotidyltransferase family. Mg(2+) is required as a cofactor.

The protein localises to the cytoplasm. It carries out the reaction RNA(n+1) + phosphate = RNA(n) + a ribonucleoside 5'-diphosphate. Its function is as follows. Involved in mRNA degradation. Catalyzes the phosphorolysis of single-stranded polyribonucleotides processively in the 3'- to 5'-direction. The sequence is that of Polyribonucleotide nucleotidyltransferase from Paracoccus denitrificans (strain Pd 1222).